A 225-amino-acid polypeptide reads, in one-letter code: 2-C-methyl-D-erythritol 4-phosphate cytidylyltransferase (225 aa).

The protein belongs to the IspD/TarI cytidylyltransferase family. IspD subfamily.

It catalyses the reaction 2-C-methyl-D-erythritol 4-phosphate + CTP + H(+) = 4-CDP-2-C-methyl-D-erythritol + diphosphate. Its pathway is isoprenoid biosynthesis; isopentenyl diphosphate biosynthesis via DXP pathway; isopentenyl diphosphate from 1-deoxy-D-xylulose 5-phosphate: step 2/6. In terms of biological role, catalyzes the formation of 4-diphosphocytidyl-2-C-methyl-D-erythritol from CTP and 2-C-methyl-D-erythritol 4-phosphate (MEP). The polypeptide is 2-C-methyl-D-erythritol 4-phosphate cytidylyltransferase (Clostridium perfringens (strain ATCC 13124 / DSM 756 / JCM 1290 / NCIMB 6125 / NCTC 8237 / Type A)).